The sequence spans 415 residues: tRNA(Met) cytidine acetate ligase (415 aa).

ATP contacts are provided by residues 7–20 (VVEY…HRYH), Gly101, Asn162, and 187–188 (RI).

Belongs to the TmcAL family.

It is found in the cytoplasm. It carries out the reaction cytidine(34) in elongator tRNA(Met) + acetate + ATP = N(4)-acetylcytidine(34) in elongator tRNA(Met) + AMP + diphosphate. Its function is as follows. Catalyzes the formation of N(4)-acetylcytidine (ac(4)C) at the wobble position of elongator tRNA(Met), using acetate and ATP as substrates. First activates an acetate ion to form acetyladenylate (Ac-AMP) and then transfers the acetyl group to tRNA to form ac(4)C34. The polypeptide is tRNA(Met) cytidine acetate ligase (Bacillus velezensis (strain DSM 23117 / BGSC 10A6 / LMG 26770 / FZB42) (Bacillus amyloliquefaciens subsp. plantarum)).